The chain runs to 196 residues: 7-methyl-GTP pyrophosphatase (196 aa).

Asp-72 acts as the Proton acceptor in catalysis.

This sequence belongs to the Maf family. YceF subfamily. The cofactor is a divalent metal cation.

It is found in the cytoplasm. The enzyme catalyses N(7)-methyl-GTP + H2O = N(7)-methyl-GMP + diphosphate + H(+). In terms of biological role, nucleoside triphosphate pyrophosphatase that hydrolyzes 7-methyl-GTP (m(7)GTP). May have a dual role in cell division arrest and in preventing the incorporation of modified nucleotides into cellular nucleic acids. The protein is 7-methyl-GTP pyrophosphatase of Neisseria meningitidis serogroup B (strain ATCC BAA-335 / MC58).